The primary structure comprises 154 residues: Small ribosomal subunit protein bS6 (154 aa).

The interval 94-154 (VKQEGPLPTP…SSQGKESQKS (61 aa)) is disordered. The segment covering 103–112 (PRSSNKGYNQ) has biased composition (polar residues). Over residues 113–139 (SEKKDIESIDSTNKSEFKEEANDKKTA) the composition is skewed to basic and acidic residues. The span at 140-154 (TSESTSSQGKESQKS) shows a compositional bias: polar residues.

This sequence belongs to the bacterial ribosomal protein bS6 family.

Its function is as follows. Binds together with bS18 to 16S ribosomal RNA. The sequence is that of Small ribosomal subunit protein bS6 from Prochlorococcus marinus subsp. pastoris (strain CCMP1986 / NIES-2087 / MED4).